A 428-amino-acid chain; its full sequence is Glutamate-1-semialdehyde 2,1-aminomutase (428 aa).

At Lys265 the chain carries N6-(pyridoxal phosphate)lysine.

It belongs to the class-III pyridoxal-phosphate-dependent aminotransferase family. HemL subfamily. Homodimer. Requires pyridoxal 5'-phosphate as cofactor.

The protein localises to the cytoplasm. The catalysed reaction is (S)-4-amino-5-oxopentanoate = 5-aminolevulinate. It functions in the pathway porphyrin-containing compound metabolism; protoporphyrin-IX biosynthesis; 5-aminolevulinate from L-glutamyl-tRNA(Glu): step 2/2. This Shewanella loihica (strain ATCC BAA-1088 / PV-4) protein is Glutamate-1-semialdehyde 2,1-aminomutase.